Here is a 491-residue protein sequence, read N- to C-terminus: MNTQQLAKLRSIVPEMRRVRHIHFVGIGGAGMGGIAEVLANEGYQISGSDLAPNPVTQQLTSLGATIFFNHRPENVRDASVVVVSSAISADNPEIVAAHEARIPVIRRAEMLAELMRFRHGIAIAGTHGKTTTTAMVSSIYAEAGLDPTFVNGGLVKAAGVHARLGHSRYLIAEADESDASFLHLQPMVAIVTNIEADHMDTYHGDFENLKQTFINFLHNLPFYGRAVMCVDDPVIRELLPRVGRQTTTYGFSEDADVRVEDYQQIGPQGHFTLLRQGMPDLHVTLNAPGRHNALNAAAAVAVATEEGIDDDAILRALESFQGTGRRFDFLGEFPLEPVNGKAGTAMLVDDYGHHPTEVDATIKAARAGWPDKNLVMLFQPHRYTRTRDLYDDFANVLTQVDALLMLDVYPAGEAPIPGADSRSLCRTIRNRGKIDPILVSDPAQVATMLAPVLTGNDLILVQGAGNVGKIARYLSEIKLKPQIQEEEQHG.

126–132 (GTHGKTT) contacts ATP.

Belongs to the MurCDEF family.

The protein resides in the cytoplasm. It carries out the reaction UDP-N-acetyl-alpha-D-muramate + L-alanine + ATP = UDP-N-acetyl-alpha-D-muramoyl-L-alanine + ADP + phosphate + H(+). The protein operates within cell wall biogenesis; peptidoglycan biosynthesis. In terms of biological role, cell wall formation. The protein is UDP-N-acetylmuramate--L-alanine ligase of Salmonella agona (strain SL483).